Reading from the N-terminus, the 62-residue chain is Photosystem II reaction center protein Z (62 aa).

The next 2 membrane-spanning stretches (helical) occupy residues 8 to 28 (TLLA…VLLA) and 41 to 61 (FSGS…NSFV).

This sequence belongs to the PsbZ family. As to quaternary structure, PSII is composed of 1 copy each of membrane proteins PsbA, PsbB, PsbC, PsbD, PsbE, PsbF, PsbH, PsbI, PsbJ, PsbK, PsbL, PsbM, PsbT, PsbY, PsbZ, Psb30/Ycf12, at least 3 peripheral proteins of the oxygen-evolving complex and a large number of cofactors. It forms dimeric complexes.

It localises to the plastid. The protein localises to the chloroplast thylakoid membrane. May control the interaction of photosystem II (PSII) cores with the light-harvesting antenna, regulates electron flow through the 2 photosystem reaction centers. PSII is a light-driven water plastoquinone oxidoreductase, using light energy to abstract electrons from H(2)O, generating a proton gradient subsequently used for ATP formation. This is Photosystem II reaction center protein Z from Ostreococcus tauri.